We begin with the raw amino-acid sequence, 670 residues long: UvrABC system protein B (670 aa).

The region spanning 28–414 is the Helicase ATP-binding domain; it reads NNFKQGLQEQ…KKIPIVEQII (387 aa). Residue 41–48 coordinates ATP; the sequence is GATGTGKT. The Beta-hairpin signature appears at 94–117; the sequence is YYDYYQPEAYVASSDTYIEKDSKI. The Helicase C-terminal domain occupies 432-594; the sequence is QMDDLYFEIK…VTPTALNKTI (163 aa). Residues 631-666 form the UVR domain; it reads NKEIKRLQKMMKEAAKTLDFEKAATLRDLILELEKK.

Belongs to the UvrB family. In terms of assembly, forms a heterotetramer with UvrA during the search for lesions. Interacts with UvrC in an incision complex.

It is found in the cytoplasm. In terms of biological role, the UvrABC repair system catalyzes the recognition and processing of DNA lesions. A damage recognition complex composed of 2 UvrA and 2 UvrB subunits scans DNA for abnormalities. Upon binding of the UvrA(2)B(2) complex to a putative damaged site, the DNA wraps around one UvrB monomer. DNA wrap is dependent on ATP binding by UvrB and probably causes local melting of the DNA helix, facilitating insertion of UvrB beta-hairpin between the DNA strands. Then UvrB probes one DNA strand for the presence of a lesion. If a lesion is found the UvrA subunits dissociate and the UvrB-DNA preincision complex is formed. This complex is subsequently bound by UvrC and the second UvrB is released. If no lesion is found, the DNA wraps around the other UvrB subunit that will check the other stand for damage. This Onion yellows phytoplasma (strain OY-M) protein is UvrABC system protein B.